The following is a 340-amino-acid chain: MSDEDDVDDVDAEQDEVESDKEIEEWEDYRKETEEASEEWLPTPITEAMMKEGLSLLCKIGSGLAHAYIKLEAKDRDLTDISLLRSYIHLRYVDISENHITDISPLNSLTHLLWLKADGNQLRSARMNELPYLQIASFSYNQIIDTEGIFHPRLGSLDLKGNRIHQVTGLDPERLSSLHTLELRGNQLESTKGIYLPKLKNLYLAQNLLKKVEGLENLSNLTTLHLRDNQIETLNGFSQEMKSLQYLNLRSNMISDLAELAKLRDLPKLRALVLLDNPCADETDYRQEALVQMAHLERLDKEFYEDDDRAEAEEIRQRLKEEQDQDLDPDQDMEPYLPPV.

Residues 1–27 (MSDEDDVDDVDAEQDEVESDKEIEEWE) are compositionally biased toward acidic residues. A disordered region spans residues 1–38 (MSDEDDVDDVDAEQDEVESDKEIEEWEDYRKETEEASE). LRR repeat units follow at residues 89 to 110 (HLRYVDISENHITDISPLNSLT), 111 to 134 (HLLWLKADGNQLRSARMNELPYLQ), 177 to 197 (SLHTLELRGNQLESTKGIYLP), 198 to 219 (KLKNLYLAQNLLKKVEGLENLS), 220 to 241 (NLTTLHLRDNQIETLNGFSQEM), and 243 to 264 (SLQYLNLRSNMISDLAELAKLR). An interaction with RSPH9 region spans residues 205 to 340 (AQNLLKKVEG…QDMEPYLPPV (136 aa)). An LRRCT domain is found at 277 to 315 (NPCADETDYRQEALVQMAHLERLDKEFYEDDDRAEAEEI). Residues 305–328 (EDDDRAEAEEIRQRLKEEQDQDLD) adopt a coiled-coil conformation. The interval 317–340 (QRLKEEQDQDLDPDQDMEPYLPPV) is disordered. The segment covering 323-333 (QDQDLDPDQDM) has biased composition (acidic residues).

In terms of assembly, component of the axonemal radial spoke complex. Interacts with RSPH3A and RSPH3B. Interacts with RSPH9. In terms of tissue distribution, expressed in the testis (at protein level).

The protein localises to the cytoplasm. It localises to the cytoskeleton. It is found in the flagellum axoneme. Essential for sperm motility and male fertility. Plays an important role in the proper assembly of the third radial spoke (RS3) head and the bridge structure between RS2 and RS3 in the sperm flagella. The protein is Leucine-rich repeat-containing protein 23 (Lrrc23) of Mus musculus (Mouse).